The following is a 699-amino-acid chain: SPS-sensor serine protease component SSY5 (699 aa).

Disordered stretches follow at residues 1 to 113 (MVRF…LQGF) and 128 to 158 (PVKEEESQDTQNTLDVSSSTSSTLATSENAR). Residues 1–381 (MVRFFGLNKK…YCVKDYIKKA (381 aa)) constitute a propeptide that is removed on maturation. A compositionally biased stretch (polar residues) spans 24–38 (NEQNAAETSSSNVSG). Over residues 39 to 51 (NEERIDPNSHDTN) the composition is skewed to basic and acidic residues. The span at 61–78 (STTFGSSIQSSSIFSRGR) shows a compositional bias: low complexity. Positions 83–93 (TGASSSMATSE) are enriched in polar residues. 2 stretches are compositionally biased toward low complexity: residues 97-109 (HSSGHSGSKNSKN) and 144-154 (SSSTSSTLATS). Residues 459–699 (FAITCAHVVL…QWDIDPQLDG (241 aa)) are serine protease. Residues His-465, Asp-545, and Ser-640 each act as charge relay system in the active site.

Belongs to the peptidase S64 family. As to quaternary structure, component of the plasma membrane SPS (SSY1-PTR3-SSY5) amino acid sensor complex. Post-translationally, the propeptide is autoproteolytically cleaved from the catalytic domain but remains associated, forming an inactive protease complex. This processing occurs even in the absence of signaling.

The protein resides in the cell membrane. Functionally, protease component of the SPS-sensor system, which regulates the expression of several amino acid-metabolizing enzymes and amino acid- and peptide-permeases in response to extracellular amino acid levels by controlling the activity of two transcription factors, STP1 and STP2. Catalyzes the activation of these transcription factors, which are synthesized as latent cytoplasmic precursors, by proteolytic removal of an N-terminal inhibitory domain containing cytoplasmic retention motifs. SSY5 binds as an inactive protease complex to STP1. In response to extracellular amino acids and dependent on the other SPS-sensor components, the inhibitory propeptide is induced to dissociate, and thereby enables the catalytic domain to process STP1. The polypeptide is SPS-sensor serine protease component SSY5 (SSY5) (Saccharomyces cerevisiae (strain ATCC 204508 / S288c) (Baker's yeast)).